Reading from the N-terminus, the 1021-residue chain is Collagen alpha-1(I) chain (1021 aa).

Positions 1 to 1021 (DEKSAGGISV…PGPPGPPGPP (1021 aa)) are disordered. Allysine is present on K3. S4 carries the phosphoserine modification. P23, P26, P29, P38, P41, P44, P59, P74, P80, P89, and P95 each carry 4-hydroxyproline. Residues 31–50 (PQGFQGPPGEPGEPGASGPM) are compositionally biased toward low complexity. Basic and acidic residues predominate over residues 62–76 (NGDDGEAGKPGRPGE). K98 is modified (5-hydroxylysine; alternate). A glycan (O-linked (Gal...) hydroxylysine; alternate) is linked at K98. Residue S104 is modified to Phosphoserine. Positions 112–128 (DAGPAGPKGEPGSPGEN) are enriched in low complexity. P122, P125, P131, P140, P146, P167, P176, P179, P206, P209, P221, P227, P236, P242, P245, and P260 each carry 4-hydroxyproline. Low complexity predominate over residues 146–164 (PGASGPAGARGNDGATGAA). Pro residues predominate over residues 166–178 (PPGPTGPAGPPGF). Low complexity predominate over residues 212 to 262 (AGAAGPAGNPGADGQPGAKGANGAPGIAGAPGFPGARGPSGPQGPSGAPGP). K263 carries the post-translational modification 5-hydroxylysine. 4-hydroxyproline is present on residues P269, P272, P284, P293, P308, P314, P323, and P329. The span at 318-327 (GERGGPGSRG) shows a compositional bias: gly residues. Residue K338 is modified to 5-hydroxylysine. 28 positions are modified to 4-hydroxyproline: P347, P356, P362, P368, P377, P380, P389, P398, P404, P416, P425, P434, P437, P455, P472, P478, P484, P490, P496, P502, P514, P523, P534, P546, P549, P555, P561, and P570. Residues 371–425 (KGLTGSPGSPGPDGKTGPPGPAGQDGRPGPAGPPGARGQAGVMGFPGPKGAAGEP) are compositionally biased toward low complexity. A compositionally biased stretch (low complexity) spans 484-493 (PGEAGKPGEQ). The segment covering 536–558 (NDGAKGDAGAPGAPGSQGAPGLQ) has biased composition (low complexity). Residue K582 is modified to 5-hydroxylysine. A 4-hydroxyproline mark is found at P588 and P603. A compositionally biased stretch (low complexity) spans 615 to 629 (AGPSGPAGPTGARGA). Residue S618 is modified to Phosphoserine. Residues P630, P636, P639, P648, P654, P681, and P690 each carry the 4-hydroxyproline modification. Low complexity predominate over residues 642-672 (AGFAGPPGADGQPGAKGEPGDAGAKGDAGPS). Position 693 is a 5-hydroxylysine (K693). Low complexity predominate over residues 698–714 (SAGPPGATGFPGAAGRV). Residues P702 and P708 each carry the 4-hydroxyproline modification. A 3-hydroxyproline modification is found at P716. 4-hydroxyproline occurs at positions 717, 726, 729, 750, 759, 768, 777, 794, 803, 806, 812, 827, 833, 839, 848, and 854. Residues 743-752 (ETGPAGRPGE) are compositionally biased toward low complexity. Residues 762–777 (SGEKGSPGADGPAGAP) are compositionally biased toward low complexity. The span at 826–836 (PPGPMGPPGLA) shows a compositional bias: pro residues. A compositionally biased stretch (low complexity) spans 838-853 (PPGEAGREGSPGAEGS). A 5-hydroxylysine modification is found at K863. Residues 871–886 (PGPPGAPGAPGAPGPV) are compositionally biased toward pro residues. 4-hydroxyproline occurs at positions 874, 877, and 880. Low complexity predominate over residues 907 to 921 (AGPAGARGPAGPQGP). The span at 922–936 (RGDKGETGEQGDRGI) shows a compositional bias: basic and acidic residues. Residue K925 is modified to 5-hydroxylysine. Position 937 is a 5-hydroxylysine; alternate (K937). Residue K937 is glycosylated (O-linked (Gal...) hydroxylysine; alternate). 4 positions are modified to 4-hydroxyproline: P952, P955, P973, and P988. A compositionally biased stretch (low complexity) spans 955–988 (PGEQGPSGASGPAGPRGPPGSAGTPGKDGLNGLP). At P993 the chain carries 3-hydroxyproline. P994 bears the 4-hydroxyproline mark. The segment covering 1006 to 1021 (VGPPGPPGPPGPPGPP) has biased composition (pro residues). A 3-hydroxyproline modification is found at P1008. Position 1009 is a 4-hydroxyproline (P1009). P1011 carries the 3-hydroxyproline modification. A 4-hydroxyproline modification is found at P1012. P1014 is subject to 3-hydroxyproline. Residues P1015, P1018, and P1021 each carry the 4-hydroxyproline modification.

This sequence belongs to the fibrillar collagen family. As to quaternary structure, trimers of one alpha 2(I) and two alpha 1(I) chains. Post-translationally, contains mostly 4-hydroxyproline. Proline residues at the third position of the tripeptide repeating unit (G-X-Y) are hydroxylated in some or all of the chains. Contains 3-hydroxyproline at a few sites. This modification occurs on the first proline residue in the sequence motif Gly-Pro-Hyp, where Hyp is 4-hydroxyproline. In terms of processing, lysine residues at the third position of the tripeptide repeating unit (G-X-Y) are 5-hydroxylated in some or all of the chains. Post-translationally, O-glycosylated on hydroxylated lysine residues. The O-linked glycan consists of a Glc-Gal disaccharide. In terms of tissue distribution, expressed in bones.

It localises to the secreted. The protein resides in the extracellular space. It is found in the extracellular matrix. Its function is as follows. Type I collagen is a member of group I collagen (fibrillar forming collagen). The sequence is that of Collagen alpha-1(I) chain from Doedicurus sp. (South American giant glyptodont).